Consider the following 114-residue polypeptide: uncharacterized protein (114 aa).

The HTH arsR-type domain maps to 2-97; it reads ESEPLYKLKA…VARKVLARVL (96 aa). A DNA-binding region (H-T-H motif) is located at residues 37–60; it reads GELLSSDVGLESSNLSQQLGVLRR.

This is an uncharacterized protein from Mycobacterium tuberculosis (strain CDC 1551 / Oshkosh).